An 800-amino-acid polypeptide reads, in one-letter code: Phenylalanine--tRNA ligase beta subunit (800 aa).

The 116-residue stretch at 39-154 (TKDIKNLVVG…ESQVPGTDAL (116 aa)) folds into the tRNA-binding domain. In terms of domain architecture, B5 spans 408-483 (AFITPIDITA…RIYGYDDIPS (76 aa)). The Mg(2+) site is built by D461, D467, E470, and E471. The 93-residue stretch at 708 to 800 (PIFPGMSRDI…ALIEQGAVIR (93 aa)) folds into the FDX-ACB domain.

The protein belongs to the phenylalanyl-tRNA synthetase beta subunit family. Type 1 subfamily. Tetramer of two alpha and two beta subunits. It depends on Mg(2+) as a cofactor.

It is found in the cytoplasm. The catalysed reaction is tRNA(Phe) + L-phenylalanine + ATP = L-phenylalanyl-tRNA(Phe) + AMP + diphosphate + H(+). This Staphylococcus aureus (strain bovine RF122 / ET3-1) protein is Phenylalanine--tRNA ligase beta subunit.